The chain runs to 950 residues: Bifunctional glutamine synthetase adenylyltransferase/adenylyl-removing enzyme (950 aa).

Residues 1 to 443 (MSLPSPLLPV…VFVTLIGDEE (443 aa)) are adenylyl removase. The segment at 450–950 (ERHFNELWDM…WQEWLESSTI (501 aa)) is adenylyl transferase.

The protein belongs to the GlnE family. Mg(2+) is required as a cofactor.

It carries out the reaction [glutamine synthetase]-O(4)-(5'-adenylyl)-L-tyrosine + phosphate = [glutamine synthetase]-L-tyrosine + ADP. The enzyme catalyses [glutamine synthetase]-L-tyrosine + ATP = [glutamine synthetase]-O(4)-(5'-adenylyl)-L-tyrosine + diphosphate. Involved in the regulation of glutamine synthetase GlnA, a key enzyme in the process to assimilate ammonia. When cellular nitrogen levels are high, the C-terminal adenylyl transferase (AT) inactivates GlnA by covalent transfer of an adenylyl group from ATP to specific tyrosine residue of GlnA, thus reducing its activity. Conversely, when nitrogen levels are low, the N-terminal adenylyl removase (AR) activates GlnA by removing the adenylyl group by phosphorolysis, increasing its activity. The regulatory region of GlnE binds the signal transduction protein PII (GlnB) which indicates the nitrogen status of the cell. The sequence is that of Bifunctional glutamine synthetase adenylyltransferase/adenylyl-removing enzyme from Vibrio vulnificus (strain YJ016).